The sequence spans 289 residues: Phospholipase A1 (289 aa).

Residues 1–20 form the signal peptide; it reads MRTLQGWLLPVFMLPMAVYA. The Periplasmic segment spans residues 21–52; the sequence is QEATVKEVHDAPAVRGSIIANMLQEHDNPFTL. A beta stranded transmembrane segment spans residues 53–65; sequence YPYDTNYLIYTQT. Residues 66–84 are Extracellular-facing; sequence SDLNKEAIASYDWAENARK. A beta stranded transmembrane segment spans residues 85 to 99; the sequence is DEVKFQLSLAFPLWR. At 100 to 105 the chain is on the periplasmic side; sequence GILGPN. The beta stranded transmembrane segment at 106–118 threads the bilayer; the sequence is SVLGASYTQKSWW. Topologically, residues 119–128 are extracellular; the sequence is QLSNSEESSP. A Ca(2+)-binding site is contributed by S126. Residues 129-148 traverse the membrane as a beta stranded segment; that stretch reads FRETNYEPQLFLGFATDYRF. The Periplasmic portion of the chain corresponds to 149–150; sequence AG. Residues 151–164 traverse the membrane as a beta stranded segment; sequence WTLRDVEMGYNHDS. H162 (proton acceptor) is an active-site residue. The Nucleophile role is filled by S164. Topologically, residues 165 to 173 are extracellular; sequence NGRSDPTSR. Residues R167 and S172 each contribute to the Ca(2+) site. The beta stranded transmembrane segment at 174–186 threads the bilayer; the sequence is SWNRLYTRLMAEN. The Periplasmic segment spans residues 187–188; sequence GN. Residues 189–198 form a beta stranded membrane-spanning segment; that stretch reads WLVEVKPWYV. Residues 199–216 are Extracellular-facing; that stretch reads VGNTDDNPDITKYMGYYQ. D204 is a binding site for Ca(2+). Residues 217–223 traverse the membrane as a beta stranded segment; it reads LKIGYHL. Topologically, residues 224-225 are periplasmic; the sequence is GD. A beta stranded transmembrane segment spans residues 226–234; it reads AVLSAKGQY. Topologically, residues 235–241 are extracellular; sequence NWNTGYG. A beta stranded transmembrane segment spans residues 242–250; sequence GAELGLSYP. Topologically, residues 251–255 are periplasmic; it reads ITKHV. The chain crosses the membrane as a beta stranded span at residues 256 to 265; the sequence is RLYTQVYSGY. Topologically, residues 266 to 274 are extracellular; it reads GESLIDYNF. Residues 275–286 form a beta stranded membrane-spanning segment; that stretch reads NQTRVGVGVMLN. Topologically, residues 287-289 are periplasmic; sequence DLF.

It belongs to the phospholipase A1 family. In terms of assembly, homodimer; dimerization is reversible, and the dimeric form is the active one. Ca(2+) serves as cofactor.

Its subcellular location is the cell outer membrane. It carries out the reaction a 1,2-diacyl-sn-glycero-3-phosphocholine + H2O = a 2-acyl-sn-glycero-3-phosphocholine + a fatty acid + H(+). It catalyses the reaction a 1,2-diacyl-sn-glycero-3-phosphocholine + H2O = a 1-acyl-sn-glycero-3-phosphocholine + a fatty acid + H(+). In terms of biological role, hydrolysis of phosphatidylcholine with phospholipase A2 (EC 3.1.1.4) and phospholipase A1 (EC 3.1.1.32) activities. In Escherichia coli O157:H7, this protein is Phospholipase A1 (pldA).